The following is a 339-amino-acid chain: Paired box protein Pax-9 (339 aa).

Positions 2–128 (AFGEVNQLGG…SSISRILRNK (127 aa)) form a DNA-binding region, paired. Positions 5-61 (EVNQLGGVFVNGRPLPNAIRLRIVELAQLGIRPCDISRQLRVSHGCVSKILARYNET) are PAI subdomain. The tract at residues 80–128 (TVVKHIRTYKQRDPGIFAWEIRDRLLADGVCDKYNVPSVSSISRILRNK) is RED subdomain.

It is found in the nucleus. In Gallus gallus (Chicken), this protein is Paired box protein Pax-9 (PAX9).